The primary structure comprises 232 residues: Ribonuclease 3 (232 aa).

In terms of domain architecture, RNase III spans 7 to 135 (IQAVESKLKF…ILGAVYLDGG (129 aa)). Glutamate 48 serves as a coordination point for Mg(2+). Residue aspartate 52 is part of the active site. Residues asparagine 121 and glutamate 124 each contribute to the Mg(2+) site. The active site involves glutamate 124. The region spanning 160 to 229 (NPKNRLQQFT…AKQALSTHDD (70 aa)) is the DRBM domain.

It belongs to the ribonuclease III family. As to quaternary structure, homodimer. It depends on Mg(2+) as a cofactor.

The protein resides in the cytoplasm. It catalyses the reaction Endonucleolytic cleavage to 5'-phosphomonoester.. Digests double-stranded RNA. Involved in the processing of primary rRNA transcript to yield the immediate precursors to the large and small rRNAs (23S and 16S). Processes some mRNAs, and tRNAs when they are encoded in the rRNA operon. Processes pre-crRNA and tracrRNA of type II CRISPR loci if present in the organism. The protein is Ribonuclease 3 of Chlamydia muridarum (strain MoPn / Nigg).